A 541-amino-acid polypeptide reads, in one-letter code: GMP synthase [glutamine-hydrolyzing] (541 aa).

Positions 15–209 (TILTLDFGSQ…AVNICGCKQN (195 aa)) constitute a Glutamine amidotransferase type-1 domain. C91 functions as the Nucleophile in the catalytic mechanism. Active-site residues include H183 and E185. Positions 210–416 (WTMARFVDQE…LGIAHEMVMR (207 aa)) constitute a GMPS ATP-PPase domain. 238 to 244 (SGGVDST) contributes to the ATP binding site. Residues R311, D478, K533, and E539 each coordinate XMP.

In terms of assembly, homodimer. Mg(2+) is required as a cofactor.

The protein resides in the cytoplasm. It is found in the cytosol. It carries out the reaction XMP + L-glutamine + ATP + H2O = GMP + L-glutamate + AMP + diphosphate + 2 H(+). It participates in purine metabolism; GMP biosynthesis; GMP from XMP (L-Gln route): step 1/1. Functionally, catalyzes the conversion of xanthine monophosphate (XMP) to GMP in the presence of glutamine and ATP through an adenyl-XMP intermediate. This Aspergillus oryzae (strain ATCC 42149 / RIB 40) (Yellow koji mold) protein is GMP synthase [glutamine-hydrolyzing] (gua1).